The sequence spans 86 residues: Defensin-like SRCA-homolog protein (86 aa).

The first 26 residues, 1–26, serve as a signal peptide directing secretion; it reads MRCVVLFMVSCLLIVLLINHFEEVEA. Intrachain disulfides connect cysteine 32–cysteine 84, cysteine 42–cysteine 70, cysteine 52–cysteine 79, and cysteine 68–cysteine 81.

This sequence belongs to the DEFL family.

Its subcellular location is the secreted. Its function is as follows. Involved in male-mediated self-incompatibility. This is Defensin-like SRCA-homolog protein (SCR37) from Arabidopsis lyrata (Lyre-leaved rock-cress).